The chain runs to 435 residues: F-box only protein 9 (435 aa).

The segment at 1–25 (MAEAEEDCHSDAVRVGDEGHESPAE) is disordered. Basic and acidic residues predominate over residues 7–25 (DCHSDAVRVGDEGHESPAE). Residues 82–115 (ARELFLKAVEEEQNGALYEAIKFYRRAMQLVPDI) form a TPR repeat. Residue Ser124 is modified to Phosphoserine. In terms of domain architecture, F-box spans 173–224 (QTHISVLPMEVLMYIFRWVVSSDLDLRSLEQLSLVCRGFYICARDPEIWRLA).

In terms of assembly, part of the SCF (SKP1-CUL1-F-box) E3 ubiquitin-protein ligase complex SCF(FBXO9) composed of CUL1, SKP1, RBX1 and FBXO9. Interacts with TTI1 and TELO2; when TTI1 and TELO2 are phosphorylated by CK2.

The protein localises to the cytoplasm. It functions in the pathway protein modification; protein ubiquitination. Its function is as follows. Substrate recognition component of a SCF (SKP1-CUL1-F-box protein) E3 ubiquitin-protein ligase complex which mediates the ubiquitination and subsequent proteasomal degradation of target proteins and plays a role in several biological processes such as cell cycle, cell proliferation, or maintenance of chromosome stability. Ubiquitinates mTORC1-bound TTI1 and TELO2 when they are phosphorylated by CK2 following growth factor deprivation, leading to their degradation. In contrast, does not mediate ubiquitination of TTI1 and TELO2 when they are part of the mTORC2 complex. As a consequence, mTORC1 is inactivated to restrain cell growth and protein translation, while mTORC2 is the activated due to the relief of feedback inhibition by mTORC1. Plays a role in maintaining epithelial cell survival by regulating the turn-over of chromatin modulator PRMT4 through ubiquitination and degradation by the proteasomal pathway. Also regulates PPARgamma stability by facilitating PPARgamma/PPARG ubiquitination and thereby plays a role in adipocyte differentiation. This is F-box only protein 9 (Fbxo9) from Rattus norvegicus (Rat).